The chain runs to 345 residues: tRNA N6-adenosine threonylcarbamoyltransferase (345 aa).

Fe cation contacts are provided by His109 and His113. Residues 136–140 (TVSGG), Asp169, Gly182, Asp186, and Asn284 each bind substrate. Asp312 lines the Fe cation pocket.

It belongs to the KAE1 / TsaD family. The cofactor is Fe(2+).

It localises to the cytoplasm. The enzyme catalyses L-threonylcarbamoyladenylate + adenosine(37) in tRNA = N(6)-L-threonylcarbamoyladenosine(37) in tRNA + AMP + H(+). Required for the formation of a threonylcarbamoyl group on adenosine at position 37 (t(6)A37) in tRNAs that read codons beginning with adenine. Is involved in the transfer of the threonylcarbamoyl moiety of threonylcarbamoyl-AMP (TC-AMP) to the N6 group of A37, together with TsaE and TsaB. TsaD likely plays a direct catalytic role in this reaction. This Prosthecochloris aestuarii (strain DSM 271 / SK 413) protein is tRNA N6-adenosine threonylcarbamoyltransferase.